The following is a 374-amino-acid chain: CMP-N-acetylneuraminate-beta-1,4-galactoside alpha-2,3-sialyltransferase (374 aa).

The Cytoplasmic segment spans residues 1-8 (MGLLVFVR). Residues 9–28 (NLLLALCLFLVLGFLYYSAW) traverse the membrane as a helical; Signal-anchor for type II membrane protein segment. Topologically, residues 29-374 (KLHLLQWEDS…RVITDLSSGI (346 aa)) are lumenal. Residues Asn79 and Asn170 are each glycosylated (N-linked (GlcNAc...) asparagine). Cys159 and Cys313 are oxidised to a cystine.

This sequence belongs to the glycosyltransferase 29 family. The soluble form derives from the membrane form by proteolytic processing. In terms of tissue distribution, found in all tissues tested. High expression found in brain, liver, kidney, colon, heart and lung.

Its subcellular location is the golgi apparatus. It is found in the golgi stack membrane. The protein resides in the secreted. The enzyme catalyses a beta-D-galactosyl-(1-&gt;4)-N-acetyl-beta-D-glucosaminyl derivative + CMP-N-acetyl-beta-neuraminate = an N-acetyl-alpha-neuraminyl-(2-&gt;3)-beta-D-galactosyl-(1-&gt;4)-N-acetyl-beta-D-glucosaminyl derivative + CMP + H(+). Its pathway is protein modification; protein glycosylation. Catalyzes the formation of the NeuAc-alpha-2,3-Gal-beta-1,4-GlcNAc-, NeuAc-alpha-2,3-Gal-beta-1,3-GlcNAc- and NeuAc-alpha-2,3-Gal-beta-1,3-GalNAc- sequences found in terminal carbohydrate groups of glycoproteins and glycolipids. The highest activity is toward Gal-beta-1,3-GlcNAc and the lowest toward Gal-beta-1,3-GalNAc. This is CMP-N-acetylneuraminate-beta-1,4-galactoside alpha-2,3-sialyltransferase (St3gal3) from Rattus norvegicus (Rat).